The following is a 268-amino-acid chain: GTP cyclohydrolase FolE2 (268 aa).

Belongs to the GTP cyclohydrolase IV family.

The enzyme catalyses GTP + H2O = 7,8-dihydroneopterin 3'-triphosphate + formate + H(+). It participates in cofactor biosynthesis; 7,8-dihydroneopterin triphosphate biosynthesis; 7,8-dihydroneopterin triphosphate from GTP: step 1/1. Its function is as follows. Converts GTP to 7,8-dihydroneopterin triphosphate. This is GTP cyclohydrolase FolE2 from Janthinobacterium sp. (strain Marseille) (Minibacterium massiliensis).